The chain runs to 501 residues: MSSGQQPPRRVTNVGSLLLTPQENESLFSFLGKKCVTMSSAVVQLYAADRNCMWSKKCSGVACLVKDNPQRSYFLRIFDIKDGKLLWEQELYNNFVYNSPRGYFHTFAGDTCQVALNFANEEEAKKFRKAVTDLLGRRQRKSEKRRDAPNGPNLPMATVDIKNPEITTNRFYSSQVNNISHTKEKKKGKAKKKRLTKADIGTPSNFQHIGHVGWDPNTGFDLNNLDPELKNLFDMCGISEAQLKDRETSKVIYDFIEKTGGVEAVKNELRRQAPPPPPPSRGGPPPPPPPPHSSGPPPPPARGRGAPPPPPSRAPTAAPPPPPPSRPGVVVPPPPPNRMYPPPPPALPSSAPSGPPPPPPLSMAGSTAPPPPPPPPPPPGPPPPPGLPSDGDHQVPASSGNKAALLDQIREGAQLKKVEQNSRPVSCSGRDALLDQIRQGIQLKSVSDGQESTPPTPAPTSGIVGALMEVMQKRSKAIHSSDEDEDDDDEEDFQDDDEWED.

The residue at position 2 (S2) is an N-acetylserine. Residues 31–138 (LGKKCVTMSS…KAVTDLLGRR (108 aa)) form the WH1 domain. Disordered stretches follow at residues 135 to 158 (LGRRQRKSEKRRDAPNGPNLPMAT) and 180 to 202 (SHTKEKKKGKAKKKRLTKADIGT). Residues 183 to 195 (KEKKKGKAKKKRL) are compositionally biased toward basic residues. Positions 200–213 (IGTPSNFQHIGHVG) constitute a CRIB domain. S239 bears the Phosphoserine; by TNK2 mark. Y253 carries the phosphotyrosine; by FAK1 and TNK2 modification. Disordered regions lie at residues 263–405 (EAVK…KAAL) and 442–501 (QLKS…EWED). 2 stretches are compositionally biased toward pro residues: residues 273 to 361 (APPP…PPPL) and 368 to 387 (APPPPPPPPPPPGPPPPPGL). R304 is modified (omega-N-methylarginine). 2 WH2 domains span residues 401 to 418 (NKAALLDQIREGAQLKKV) and 429 to 446 (GRDALLDQIRQGIQLKSV). Residues 442-453 (QLKSVSDGQEST) are compositionally biased toward polar residues. A phosphoserine mark is found at S480 and S481. The span at 482–501 (DEDEDDDDEEDFQDDDEWED) shows a compositional bias: acidic residues.

In terms of assembly, binds actin and the Arp2/3 complex. Interacts with CDC42. Interacts with FCHSD1. Interacts with FCHSD2. Binds to SH3 domains of GRB2. Interacts with the C-terminal SH3 domain of DNMBP. Interacts with SNX9. Interacts with the WW domains of PRPF40A/FBP11. Interacts with PTK2/FAK1. Interacts with PACSIN1, PACSIN2 and PACSIN3. Interacts with NOSTRIN. Binds to TNK2. Interacts with SNX33. Interacts with NONO (via second RRM domain); the interaction is direct. Component of a multiprotein complex with NONO and SFPQ; associates with the complex via direct interaction with NONO. In terms of processing, phosphorylation at Ser-239, Tyr-253, Ser-480 and Ser-481 enhances actin polymerization activity.

Its subcellular location is the cytoplasm. The protein localises to the cytoskeleton. It localises to the nucleus. Regulates actin polymerization by stimulating the actin-nucleating activity of the Arp2/3 complex. Involved in various processes, such as mitosis and cytokinesis, via its role in the regulation of actin polymerization. Together with CDC42, involved in the extension and maintenance of the formation of thin, actin-rich surface projections called filopodia. In addition to its role in the cytoplasm, also plays a role in the nucleus by regulating gene transcription, probably by promoting nuclear actin polymerization. Binds to HSF1/HSTF1 and forms a complex on heat shock promoter elements (HSE) that negatively regulates HSP90 expression. Plays a role in dendrite spine morphogenesis. This is Actin nucleation-promoting factor WASL (Wasl) from Rattus norvegicus (Rat).